The following is a 394-amino-acid chain: Phosphopentomutase (394 aa).

Mn(2+) is bound by residues D14, D287, H292, D328, H329, and H340.

It belongs to the phosphopentomutase family. Requires Mn(2+) as cofactor.

The protein resides in the cytoplasm. It carries out the reaction 2-deoxy-alpha-D-ribose 1-phosphate = 2-deoxy-D-ribose 5-phosphate. It catalyses the reaction alpha-D-ribose 1-phosphate = D-ribose 5-phosphate. Its pathway is carbohydrate degradation; 2-deoxy-D-ribose 1-phosphate degradation; D-glyceraldehyde 3-phosphate and acetaldehyde from 2-deoxy-alpha-D-ribose 1-phosphate: step 1/2. In terms of biological role, isomerase that catalyzes the conversion of deoxy-ribose 1-phosphate (dRib-1-P) and ribose 1-phosphate (Rib-1-P) to deoxy-ribose 5-phosphate (dRib-5-P) and ribose 5-phosphate (Rib-5-P), respectively. In Listeria monocytogenes serotype 4a (strain HCC23), this protein is Phosphopentomutase.